The chain runs to 451 residues: COBRA-like protein 6 (451 aa).

Positions 1 to 21 (MAVLGSLLLLILAATLSVAVA) are cleaved as a signal peptide. N-linked (GlcNAc...) asparagine glycosylation is found at N30, N155, N163, N202, N227, N323, N338, and N357. N426 is lipidated: GPI-anchor amidated asparagine. The propeptide at 427–451 (AAPPAAASLVGSAVAMAALVFFLMA) is removed in mature form.

Belongs to the COBRA family.

Its subcellular location is the cell membrane. Involved in determining the orientation of cell expansion, probably by playing an important role in cellulose deposition. May act by recruiting cellulose synthesizing complexes to discrete positions on the cell surface. This Oryza sativa subsp. japonica (Rice) protein is COBRA-like protein 6 (BC1L7).